The sequence spans 227 residues: Cytidylate kinase (227 aa).

12 to 20 lines the ATP pocket; the sequence is GPSGAGKGT.

Belongs to the cytidylate kinase family. Type 1 subfamily.

It is found in the cytoplasm. The enzyme catalyses CMP + ATP = CDP + ADP. The catalysed reaction is dCMP + ATP = dCDP + ADP. The chain is Cytidylate kinase from Marinomonas sp. (strain MWYL1).